The primary structure comprises 147 residues: Large ribosomal subunit protein uL15 (147 aa).

The disordered stretch occupies residues 1-45; it reads MTIKLHHLRPAPGAKSDKIRVGRGEGGKRGKTAGRGTKGTKARKN. Basic and acidic residues predominate over residues 15 to 28; the sequence is KSDKIRVGRGEGGK.

This sequence belongs to the universal ribosomal protein uL15 family. As to quaternary structure, part of the 50S ribosomal subunit.

Its function is as follows. Binds to the 23S rRNA. This Rhodococcus jostii (strain RHA1) protein is Large ribosomal subunit protein uL15.